Reading from the N-terminus, the 185-residue chain is Elongation factor P (185 aa).

This sequence belongs to the elongation factor P family.

Its subcellular location is the cytoplasm. The protein operates within protein biosynthesis; polypeptide chain elongation. Involved in peptide bond synthesis. Stimulates efficient translation and peptide-bond synthesis on native or reconstituted 70S ribosomes in vitro. Probably functions indirectly by altering the affinity of the ribosome for aminoacyl-tRNA, thus increasing their reactivity as acceptors for peptidyl transferase. The chain is Elongation factor P from Bacillus anthracis (strain CDC 684 / NRRL 3495).